We begin with the raw amino-acid sequence, 847 residues long: Mitogen-activated protein kinase kinase kinase 11 (847 aa).

Phosphoserine is present on Ser-11. Residues 11-38 are disordered; it reads SPLGSWNGSGSGGGGGGGGGRPEGSPKA. The segment covering 17–32 has biased composition (gly residues); that stretch reads NGSGSGGGGGGGGGRP. Phosphoserine is present on Ser-35. Positions 41 to 105 constitute an SH3 domain; that stretch reads YANPVWTALF…PSNYVSRGGG (65 aa). Positions 117-379 constitute a Protein kinase domain; sequence LRLEEVIGIG…ASILQQLEAL (263 aa). ATP is bound by residues 123–131 and Lys-144; that span reads IGIGGFGKV. The Proton acceptor role is filled by Asp-241. The residue at position 277 (Thr-277) is a Phosphothreonine; by autocatalysis. Ser-281 is subject to Phosphoserine; by autocatalysis and MAP4K1. Ser-394 carries the phosphoserine modification. Leucine-zipper stretches follow at residues 403–424 and 438–459; these read IQGL…EEEL and LRRR…ELTL. Ser-507, Ser-524, Ser-548, Ser-555, and Ser-556 each carry phosphoserine. Positions 537-643 are disordered; it reads PAEPGQAWGR…SSGTPKLIQR (107 aa). A compositionally biased stretch (basic and acidic residues) spans 550 to 562; the sequence is RRLEDSSNGERRA. Positions 597–609 are enriched in low complexity; sequence SSPLGSPSTPPAL. Residues Ser-654, Ser-693, and Ser-705 each carry the phosphoserine modification. Residues 655-847 form a disordered region; the sequence is LGLGRDLQPP…QAPWVPEAGP (193 aa). Over residues 676-694 the composition is skewed to pro residues; that stretch reads TTPPTPTPAPCPTEPPPSP. The residue at position 708 (Thr-708) is a Phosphothreonine. Ser-724, Ser-727, Ser-740, Ser-748, Ser-758, Ser-770, Ser-789, Ser-793, and Ser-815 each carry phosphoserine. A compositionally biased stretch (low complexity) spans 760-773; sequence PLGLISRPRPSPLR. Residues 787-799 are compositionally biased toward pro residues; it reads RPSPLPSPQPAPR. The span at 800-816 shows a compositional bias: low complexity; that stretch reads RAPWTLFPDSDPFWDSP.

Belongs to the protein kinase superfamily. STE Ser/Thr protein kinase family. MAP kinase kinase kinase subfamily. Homodimer; undergoes dimerization during activation. Interacts with MAP2K4/MKK4. Interacts with MAP2K7/MKK7. Found in a complex with SH3RF1, RAC1, MAP2K7/MKK7, MAPK8IP1/JIP1 and MAPK8/JNK1. The cofactor is Mg(2+). In terms of processing, autophosphorylation on serine and threonine residues within the activation loop plays a role in enzyme activation. Thr-277 is likely to be the main autophosphorylation site. Phosphorylation of Ser-555 and Ser-556 is induced by CDC42. In terms of tissue distribution, expressed in a wide variety of normal and neoplastic tissues including fetal lung, liver, heart and kidney, and adult lung, liver, heart, kidney, placenta, skeletal muscle, pancreas and brain.

Its subcellular location is the cytoplasm. The protein localises to the cytoskeleton. The protein resides in the microtubule organizing center. It is found in the centrosome. It carries out the reaction L-seryl-[protein] + ATP = O-phospho-L-seryl-[protein] + ADP + H(+). The catalysed reaction is L-threonyl-[protein] + ATP = O-phospho-L-threonyl-[protein] + ADP + H(+). Its activity is regulated as follows. Homodimerization via the leucine zipper domains is required for autophosphorylation and subsequent activation. Activates the JUN N-terminal pathway. Required for serum-stimulated cell proliferation and for mitogen and cytokine activation of MAPK14 (p38), MAPK3 (ERK) and MAPK8 (JNK1) through phosphorylation and activation of MAP2K4/MKK4 and MAP2K7/MKK7. Plays a role in mitogen-stimulated phosphorylation and activation of BRAF, but does not phosphorylate BRAF directly. Influences microtubule organization during the cell cycle. This is Mitogen-activated protein kinase kinase kinase 11 from Homo sapiens (Human).